We begin with the raw amino-acid sequence, 55 residues long: Large ribosomal subunit protein bL33 (55 aa).

This sequence belongs to the bacterial ribosomal protein bL33 family.

In Methylobacterium sp. (strain 4-46), this protein is Large ribosomal subunit protein bL33.